A 376-amino-acid chain; its full sequence is Ribonucleoside-diphosphate reductase 1 subunit beta (376 aa).

Fe cation-binding residues include Asp-85, Glu-116, and His-119. Tyr-123 is an active-site residue. Fe cation-binding residues include Glu-205, Glu-239, and His-242.

It belongs to the ribonucleoside diphosphate reductase small chain family. In terms of assembly, tetramer of two alpha (R1) and two beta (R2) subunits. The B1 protein is a dimer of alpha subunits. A radical transfer pathway occurs between Tyr-123 of R2 and R1. It depends on Fe cation as a cofactor.

It carries out the reaction a 2'-deoxyribonucleoside 5'-diphosphate + [thioredoxin]-disulfide + H2O = a ribonucleoside 5'-diphosphate + [thioredoxin]-dithiol. In terms of biological role, provides the precursors necessary for DNA synthesis. Catalyzes the biosynthesis of deoxyribonucleotides from the corresponding ribonucleotides. R2 contains the tyrosyl radical required for catalysis. In Escherichia coli O157:H7, this protein is Ribonucleoside-diphosphate reductase 1 subunit beta (nrdB).